Consider the following 1146-residue polypeptide: Nucleolar protein 6 (1146 aa).

The tract at residues 1-48 (MGPAPAGEQLRGATGEPEVMEPALEGTGKEGKKASSRKRTLAEPPAKG) is disordered. A Phosphoserine modification is found at Ser56. Positions 83–114 (LLRLQVEELLKEVRLSEKKKDRIDAFLREVNQ) form a coiled coil. Ser283, Ser289, and Ser811 each carry phosphoserine.

Belongs to the NRAP family. As to quaternary structure, part of the small subunit (SSU) processome, composed of more than 70 proteins and the RNA chaperone small nucleolar RNA (snoRNA) U3. Interacts with RRP7A; required for NOL6 localization to nucleolus.

The protein localises to the nucleus. It localises to the nucleolus. Its subcellular location is the chromosome. Its function is as follows. Part of the small subunit (SSU) processome, first precursor of the small eukaryotic ribosomal subunit. During the assembly of the SSU processome in the nucleolus, many ribosome biogenesis factors, an RNA chaperone and ribosomal proteins associate with the nascent pre-rRNA and work in concert to generate RNA folding, modifications, rearrangements and cleavage as well as targeted degradation of pre-ribosomal RNA by the RNA exosome. In Homo sapiens (Human), this protein is Nucleolar protein 6.